Here is a 457-residue protein sequence, read N- to C-terminus: Probable xyloglucan 6-xylosyltransferase 5 (457 aa).

A disordered region spans residues 1 to 40; sequence MGQDGSPAHKRPSGSGGGLPTTTLTNGGGRGGRGGLLPRG. At 1–51 the chain is on the cytoplasmic side; it reads MGQDGSPAHKRPSGSGGGLPTTTLTNGGGRGGRGGLLPRGRQMQKTFNNIK. Residues 26–37 are compositionally biased toward gly residues; that stretch reads NGGGRGGRGGLL. A helical; Signal-anchor for type II membrane protein transmembrane segment spans residues 52-72; the sequence is ITILCGFVTILVLRGTIGVGN. Topologically, residues 73–457 are lumenal; the sequence is LGSSSADAVN…RTPVETKPQN (385 aa). The tract at residues 97–116 is disordered; that stretch reads RSDSDPTDLDEPQEGDMNPN. Over residues 101 to 110 the composition is skewed to acidic residues; it reads DPTDLDEPQE. Asparagine 116 and asparagine 432 each carry an N-linked (GlcNAc...) asparagine glycan.

Belongs to the glycosyltransferase 34 family. As to quaternary structure, interacts with XXT2 and CSLC4. Interacts with FUT1 and XLT2. Highly expressed in roots, stems and cauline leaves, and at lower levels in rosette leaves, flowers and siliques.

The protein localises to the golgi apparatus membrane. The catalysed reaction is Transfers an alpha-D-xylosyl residue from UDP-D-xylose to a glucose residue in xyloglucan, forming an alpha-(1-&gt;6)-D-xylosyl-D-glucose linkage.. Functionally, probable xyloglucan xylosyltransferase involved in the biosynthesis of xyloglucan in roots. May act in association with XXT1 and XXT2. Associates with other xyloglucan-synthesizing enzymes to form multiprotein complexes for xyloglucan synthesis in the Golgi. This Arabidopsis thaliana (Mouse-ear cress) protein is Probable xyloglucan 6-xylosyltransferase 5.